The chain runs to 711 residues: Protein Smaug homolog 1 (711 aa).

Ser168 is subject to Phosphoserine. The interval 278 to 323 (ARGPQCLPSDHAPLSPQSSVASSGSGGSEHLEDQTTARNTFQEEGS) is disordered. The SAM domain occupies 323–396 (SGMKDVPAWL…LKSLERDIIE (74 aa)). Phosphoserine is present on Ser420. Disordered regions lie at residues 422-448 (STTPEVRCREPSLMESPSPDCKDSAAA) and 565-588 (NRGFGQSNSLPTASSVGSGMGRRN). Thr424 carries the phosphothreonine modification. Arg566 bears the Omega-N-methylarginine mark. Residues 568–581 (FGQSNSLPTASSVG) are compositionally biased toward polar residues. A Phosphoserine modification is found at Ser573.

This sequence belongs to the SMAUG family. Expressed in brain (at protein level).

It is found in the cytoplasm. The protein resides in the cell projection. Its subcellular location is the dendrite. The protein localises to the synapse. It localises to the synaptosome. In terms of biological role, acts as a translational repressor of SRE-containing messengers. This chain is Protein Smaug homolog 1 (Samd4a), found in Mus musculus (Mouse).